We begin with the raw amino-acid sequence, 366 residues long: uncharacterized protein (366 aa).

It to B.subtilis XkdV.

This is an uncharacterized protein from Bacillus subtilis (strain 168).